We begin with the raw amino-acid sequence, 547 residues long: Aspartate 1-decarboxylase (547 aa).

At Lys-338 the chain carries N6-(pyridoxal phosphate)lysine.

It belongs to the group II decarboxylase family. Pyridoxal 5'-phosphate is required as a cofactor.

The enzyme catalyses L-aspartate + H(+) = beta-alanine + CO2. The protein operates within cofactor biosynthesis; (R)-pantothenate biosynthesis; beta-alanine from L-aspartate: step 1/1. Functionally, catalyzes the pyridoxal-dependent decarboxylation of aspartate to produce beta-alanine. Has weak activity with glutamate. This is Aspartate 1-decarboxylase from Aliivibrio fischeri (strain ATCC 700601 / ES114) (Vibrio fischeri).